The primary structure comprises 387 residues: Monomeric sarcosine oxidase (387 aa).

D6 to F36 provides a ligand contact to FAD. C316 is subject to S-8alpha-FAD cysteine.

Belongs to the MSOX/MTOX family. MSOX subfamily. As to quaternary structure, monomer. The cofactor is FAD.

Its subcellular location is the cytoplasm. It catalyses the reaction sarcosine + O2 + H2O = formaldehyde + glycine + H2O2. Catalyzes the oxidative demethylation of sarcosine. This chain is Monomeric sarcosine oxidase (soxA), found in Bacillus sp. (strain NS-129).